Reading from the N-terminus, the 284-residue chain is 4-diphosphocytidyl-2-C-methyl-D-erythritol kinase (284 aa).

Lys17 is an active-site residue. Residue 100-110 (PMGGGLGGGSS) participates in ATP binding. Asp142 is an active-site residue.

It belongs to the GHMP kinase family. IspE subfamily.

The catalysed reaction is 4-CDP-2-C-methyl-D-erythritol + ATP = 4-CDP-2-C-methyl-D-erythritol 2-phosphate + ADP + H(+). It participates in isoprenoid biosynthesis; isopentenyl diphosphate biosynthesis via DXP pathway; isopentenyl diphosphate from 1-deoxy-D-xylulose 5-phosphate: step 3/6. Catalyzes the phosphorylation of the position 2 hydroxy group of 4-diphosphocytidyl-2C-methyl-D-erythritol. The sequence is that of 4-diphosphocytidyl-2-C-methyl-D-erythritol kinase from Aromatoleum aromaticum (strain DSM 19018 / LMG 30748 / EbN1) (Azoarcus sp. (strain EbN1)).